The chain runs to 279 residues: NLP effector protein 9 (279 aa).

An N-terminal signal peptide occupies residues 1–19 (MKISNLLGVLVVFLAVVKG). The short motif at 151–161 (AIMYAWYFPDI) is the Conserved undecapeptide motif element. N-linked (GlcNAc...) asparagine glycosylation occurs at Asn176.

This sequence belongs to the Necrosis inducing protein (NPP1) family.

Its subcellular location is the secreted. Functionally, secreted effector that acts as a pathogen-associated molecular pattern (PAMP) recognized by the plant immune system. Seems not to induce necrosis in Nicotiana benthamiana leaves. This Plasmopara viticola (Downy mildew of grapevine) protein is NLP effector protein 9.